An 85-amino-acid polypeptide reads, in one-letter code: Putative sodium channel toxin Ts34 (85 aa).

The signal sequence occupies residues 1–17 (MNLPLLLLITILIEIHA). Positions 19–82 (KDGYVIYKNS…IYGETGSYCW (64 aa)) constitute an LCN-type CS-alpha/beta domain. Cystine bridges form between Cys-30–Cys-81, Cys-34–Cys-57, Cys-43–Cys-62, and Cys-47–Cys-64.

The protein belongs to the long (4 C-C) scorpion toxin superfamily. Sodium channel inhibitor family. As to expression, expressed by the venom gland.

The protein localises to the secreted. In terms of biological role, putative sodium channel toxin. In Tityus serrulatus (Brazilian scorpion), this protein is Putative sodium channel toxin Ts34.